Consider the following 208-residue polypeptide: Large ribosomal subunit protein bL25 (208 aa).

It belongs to the bacterial ribosomal protein bL25 family. CTC subfamily. In terms of assembly, part of the 50S ribosomal subunit; part of the 5S rRNA/L5/L18/L25 subcomplex. Contacts the 5S rRNA. Binds to the 5S rRNA independently of L5 and L18.

Its function is as follows. This is one of the proteins that binds to the 5S RNA in the ribosome where it forms part of the central protuberance. The protein is Large ribosomal subunit protein bL25 of Phenylobacterium zucineum (strain HLK1).